A 512-amino-acid chain; its full sequence is Maturase K (512 aa).

The protein belongs to the intron maturase 2 family. MatK subfamily.

It is found in the plastid. Its subcellular location is the chloroplast. Its function is as follows. Usually encoded in the trnK tRNA gene intron. Probably assists in splicing its own and other chloroplast group II introns. This is Maturase K from Filarum manserichense.